Reading from the N-terminus, the 109-residue chain is Aquaporin-2 (109 aa).

At 1–6 (SIAFSR) the chain is on the cytoplasmic side. A helical membrane pass occupies residues 7–27 (AVFAEFLATLIFVFFGLGSAL). Residues 28-35 (NWQQSLPS) lie on the Extracellular side of the membrane. Residues 36–54 (VLQIAMAFGLAIGTLVQAL) form a helical membrane-spanning segment. At 55 to 59 (GHISG) the chain is on the cytoplasmic side. The discontinuously helical intramembrane region spans 60–69 (AHINPAVTVA). Residues 63 to 65 (NPA) carry the NPA 1 motif. Over 70–80 (CLVGCHVSFLR) the chain is Cytoplasmic. Residues 81–102 (AAFYVAAQLLGAVAGAALLHEV) traverse the membrane as a helical segment. Over 103–109 (TPSDVRG) the chain is Extracellular.

The protein belongs to the MIP/aquaporin (TC 1.A.8) family. As to quaternary structure, homotetramer. In terms of processing, serine phosphorylation is necessary and sufficient for expression at the apical membrane. Endocytosis is not phosphorylation-dependent. N-glycosylated.

Its subcellular location is the apical cell membrane. It localises to the basolateral cell membrane. The protein resides in the cell membrane. It is found in the cytoplasmic vesicle membrane. The protein localises to the golgi apparatus. Its subcellular location is the trans-Golgi network membrane. It catalyses the reaction H2O(in) = H2O(out). It carries out the reaction glycerol(in) = glycerol(out). In terms of biological role, forms a water-specific channel that provides the plasma membranes of renal collecting duct with high permeability to water, thereby permitting water to move in the direction of an osmotic gradient. Plays an essential role in renal water homeostasis. Could also be permeable to glycerol. This chain is Aquaporin-2, found in Talpa europaea (European mole).